Reading from the N-terminus, the 573-residue chain is DNA ligase (573 aa).

Glu250 provides a ligand contact to ATP. Lys252 (N6-AMP-lysine intermediate) is an active-site residue. Arg257, Arg272, Glu301, Phe342, Arg432, and Lys438 together coordinate ATP.

It belongs to the ATP-dependent DNA ligase family. Requires Mg(2+) as cofactor.

It catalyses the reaction ATP + (deoxyribonucleotide)n-3'-hydroxyl + 5'-phospho-(deoxyribonucleotide)m = (deoxyribonucleotide)n+m + AMP + diphosphate.. In terms of biological role, DNA ligase that seals nicks in double-stranded DNA during DNA replication, DNA recombination and DNA repair. In Methanococcus maripaludis (strain C7 / ATCC BAA-1331), this protein is DNA ligase.